The sequence spans 347 residues: Guanine nucleotide-binding protein alpha-5 subunit (347 aa).

Gly-2 carries the N-myristoyl glycine lipid modification. Residue Cys-3 is the site of S-palmitoyl cysteine attachment. The G-alpha domain occupies Asn-27–Tyr-347. Positions Lys-30–Thr-43 are G1 motif. Residues Gly-35–Ser-42, Leu-170–Thr-176, Asp-195–Gln-199, Asn-264–Asp-267, and Ala-319 contribute to the GTP site. Positions 42 and 176 each coordinate Mg(2+). Residues Asp-168–Thr-176 are G2 motif. The interval Phe-191–Arg-200 is G3 motif. The G4 motif stretch occupies residues Ile-260 to Asp-267. A G5 motif region spans residues Thr-317–Thr-322.

It belongs to the G-alpha family. G(q) subfamily. G proteins are composed of 3 units; alpha, beta and gamma. The alpha chain contains the guanine nucleotide binding site.

Functionally, guanine nucleotide-binding proteins (G proteins) are involved as modulators or transducers in various transmembrane signaling systems. In Dictyostelium discoideum (Social amoeba), this protein is Guanine nucleotide-binding protein alpha-5 subunit (gpaE).